A 546-amino-acid chain; its full sequence is Chaperonin GroEL (546 aa).

Residues 30-33 (TLGP), Lys51, 87-91 (DGTTT), Gly415, 479-481 (NAA), and Asp495 each bind ATP.

It belongs to the chaperonin (HSP60) family. As to quaternary structure, forms a cylinder of 14 subunits composed of two heptameric rings stacked back-to-back. Interacts with the co-chaperonin GroES.

Its subcellular location is the cytoplasm. The catalysed reaction is ATP + H2O + a folded polypeptide = ADP + phosphate + an unfolded polypeptide.. Together with its co-chaperonin GroES, plays an essential role in assisting protein folding. The GroEL-GroES system forms a nano-cage that allows encapsulation of the non-native substrate proteins and provides a physical environment optimized to promote and accelerate protein folding. The sequence is that of Chaperonin GroEL from Azotobacter vinelandii.